Reading from the N-terminus, the 192-residue chain is Inosine triphosphate pyrophosphatase (192 aa).

8-13 (TTNLKK) is an ITP binding site. Glu-34 contacts Mg(2+). ITP is bound by residues Lys-46, 64-65 (DT), Lys-81, 141-144 (EGFD), Lys-164, and 169-170 (HR).

Belongs to the HAM1 NTPase family. Homodimer. Mg(2+) serves as cofactor. The cofactor is Mn(2+).

The protein localises to the cytoplasm. It is found in the nucleus. The catalysed reaction is ITP + H2O = IMP + diphosphate + H(+). The enzyme catalyses dITP + H2O = dIMP + diphosphate + H(+). It carries out the reaction XTP + H2O = XMP + diphosphate + H(+). Its function is as follows. Pyrophosphatase that hydrolyzes non-canonical purine nucleotides such as inosine triphosphate (ITP), deoxyinosine triphosphate (dITP) or xanthosine 5'-triphosphate (XTP) to their respective monophosphate derivatives. The enzyme does not distinguish between the deoxy- and ribose forms. Probably excludes non-canonical purines from RNA and DNA precursor pools, thus preventing their incorporation into RNA and DNA and avoiding chromosomal lesions. The polypeptide is Inosine triphosphate pyrophosphatase (Encephalitozoon cuniculi (strain GB-M1) (Microsporidian parasite)).